The chain runs to 1298 residues: DNA-directed RNA polymerase subunit beta' (1298 aa).

Zn(2+) is bound by residues Cys60, Cys62, Cys75, and Cys78. Mg(2+)-binding residues include Asp535, Asp537, and Asp539. 4 residues coordinate Zn(2+): Cys877, Cys954, Cys961, and Cys964.

It belongs to the RNA polymerase beta' chain family. In terms of assembly, the RNAP catalytic core consists of 2 alpha, 1 beta, 1 beta' and 1 omega subunit. When a sigma factor is associated with the core the holoenzyme is formed, which can initiate transcription. The cofactor is Mg(2+). Zn(2+) serves as cofactor.

It catalyses the reaction RNA(n) + a ribonucleoside 5'-triphosphate = RNA(n+1) + diphosphate. DNA-dependent RNA polymerase catalyzes the transcription of DNA into RNA using the four ribonucleoside triphosphates as substrates. The polypeptide is DNA-directed RNA polymerase subunit beta' (Micrococcus luteus (strain ATCC 4698 / DSM 20030 / JCM 1464 / CCM 169 / CCUG 5858 / IAM 1056 / NBRC 3333 / NCIMB 9278 / NCTC 2665 / VKM Ac-2230) (Micrococcus lysodeikticus)).